The primary structure comprises 134 residues: Small ribosomal subunit protein uS11 (134 aa).

Belongs to the universal ribosomal protein uS11 family. Part of the 30S ribosomal subunit. Interacts with proteins S7 and S18. Binds to IF-3.

Located on the platform of the 30S subunit, it bridges several disparate RNA helices of the 16S rRNA. Forms part of the Shine-Dalgarno cleft in the 70S ribosome. The sequence is that of Small ribosomal subunit protein uS11 from Salinibacter ruber (strain DSM 13855 / M31).